Consider the following 419-residue polypeptide: Putative zinc metalloprotease spr0242 (419 aa).

A Zn(2+)-binding site is contributed by His-18. The active site involves Glu-19. His-22 lines the Zn(2+) pocket. 3 helical membrane-spanning segments follow: residues 169–191 (LITNFAGPMNNFILGVVVFWVLI), 345–367 (ILYFLAMISINIGIFNLIPIPAL), and 388–410 (EIETYVTLAGVVIMVVLMIAVTW).

It belongs to the peptidase M50B family. The cofactor is Zn(2+).

It is found in the cell membrane. In Streptococcus pneumoniae (strain ATCC BAA-255 / R6), this protein is Putative zinc metalloprotease spr0242.